Consider the following 283-residue polypeptide: Para-Rep C7 (283 aa).

Residues 3–96 (SIRATHWCFT…IAGPWEYGTW (94 aa)) enclose the CRESS-DNA virus Rep endonuclease domain. An RCR-1 motif is present at residues 10–13 (CFTL). 2 residues coordinate a divalent metal cation: Glu-36 and His-42. Residues 42-44 (HLQ) carry the RCR-2 motif. The Nuclear localization signal motif lies at 51 to 71 (KHVTLKKMKELLPGAHLEMAK). The For DNA cleavage activity role is filled by Tyr-79. The RCR-3 motif lies at 79–82 (YCQK). Glu-84 lines the a divalent metal cation pocket. The Nuclear localization signal motif lies at 96–102 (WISSGSH). Residue 178–180 (GKS) coordinates ATP.

The protein belongs to the nanoviridea/circoviridae replication-associated protein family. As to quaternary structure, homooligomer (Potential). Rep binds to repeated DNA motifs (iterons). It depends on Mg(2+) as a cofactor. Mn(2+) is required as a cofactor.

Its subcellular location is the host nucleus. The enzyme catalyses ATP + H2O = ADP + phosphate + H(+). Initiates and terminates the replication only of its own subviral DNA molecule. The closed circular ssDNA genome is first converted to a superhelical dsDNA. Rep binds a specific hairpin at the genome origin of replication. Introduces an endonucleolytic nick within the intergenic region of the genome, thereby initiating the rolling circle replication (RCR). Following cleavage, binds covalently to the 5'-phosphate of DNA as a tyrosyl ester. The cleavage gives rise to a free 3'-OH that serves as a primer for the cellular DNA polymerase. The polymerase synthesizes the (+) strand DNA by rolling circle mechanism. After one round of replication, a Rep-catalyzed nucleotidyl transfer reaction releases a circular single-stranded virus genome, thereby terminating the replication. Displays origin-specific DNA cleavage, nucleotidyl transferase, ATPase and helicase activities. The sequence is that of Para-Rep C7 (C7) from Faba bean necrotic yellows C7 alphasatellite (FBNYC7A).